A 304-amino-acid polypeptide reads, in one-letter code: Ribonuclease Z (304 aa).

Residues H63, H65, D67, H68, H143, D213, and H271 each contribute to the Zn(2+) site. The active-site Proton acceptor is D67.

This sequence belongs to the RNase Z family. Homodimer. The cofactor is Zn(2+).

The enzyme catalyses Endonucleolytic cleavage of RNA, removing extra 3' nucleotides from tRNA precursor, generating 3' termini of tRNAs. A 3'-hydroxy group is left at the tRNA terminus and a 5'-phosphoryl group is left at the trailer molecule.. Functionally, zinc phosphodiesterase, which displays some tRNA 3'-processing endonuclease activity. Probably involved in tRNA maturation, by removing a 3'-trailer from precursor tRNA. This chain is Ribonuclease Z, found in Bacteroides fragilis (strain ATCC 25285 / DSM 2151 / CCUG 4856 / JCM 11019 / LMG 10263 / NCTC 9343 / Onslow / VPI 2553 / EN-2).